We begin with the raw amino-acid sequence, 804 residues long: Phenylalanine--tRNA ligase beta subunit (804 aa).

One can recognise a tRNA-binding domain in the interval 39–155; it reads EEGLKKLVVG…ADVKPGQDVY (117 aa). The B5 domain occupies 408–483; sequence REPVVVKTTV…RIYGYDNLKS (76 aa). Mg(2+)-binding residues include D461, D467, E470, and E471. The 94-residue stretch at 711-804 folds into the FDX-ACB domain; it reads PKFPAIERDL…LENDLDIKVR (94 aa).

This sequence belongs to the phenylalanyl-tRNA synthetase beta subunit family. Type 1 subfamily. In terms of assembly, tetramer of two alpha and two beta subunits. Mg(2+) is required as a cofactor.

It localises to the cytoplasm. It carries out the reaction tRNA(Phe) + L-phenylalanine + ATP = L-phenylalanyl-tRNA(Phe) + AMP + diphosphate + H(+). The chain is Phenylalanine--tRNA ligase beta subunit from Lactobacillus acidophilus (strain ATCC 700396 / NCK56 / N2 / NCFM).